Reading from the N-terminus, the 294-residue chain is Shikimate dehydrogenase (NADP(+)) (294 aa).

Shikimate-binding positions include 14 to 16 and Thr-61; that span reads SKS. Residue Lys-65 is the Proton acceptor of the active site. Asp-77 contacts NADP(+). Asn-86 and Asp-102 together coordinate shikimate. NADP(+)-binding positions include 140–144 and Leu-235; that span reads GSGGA. Tyr-237 provides a ligand contact to shikimate. Gly-259 contacts NADP(+).

The protein belongs to the shikimate dehydrogenase family. In terms of assembly, homodimer.

It catalyses the reaction shikimate + NADP(+) = 3-dehydroshikimate + NADPH + H(+). It participates in metabolic intermediate biosynthesis; chorismate biosynthesis; chorismate from D-erythrose 4-phosphate and phosphoenolpyruvate: step 4/7. Its function is as follows. Involved in the biosynthesis of the chorismate, which leads to the biosynthesis of aromatic amino acids. Catalyzes the reversible NADPH linked reduction of 3-dehydroshikimate (DHSA) to yield shikimate (SA). In Blochmanniella floridana, this protein is Shikimate dehydrogenase (NADP(+)).